The primary structure comprises 512 residues: Allene oxide synthase 1, chloroplastic (512 aa).

The transit peptide at 1 to 25 (MATAAACISFASPSPARVVIRRQTR) directs the protein to the chloroplast. The interval 23–43 (QTRASASASATDRQEVVSPKR) is disordered. Lys127, His158, and Lys162 together coordinate heme b. Asn315 is a (13S)-hydroperoxy-(9Z,11E,15Z)-octadecatrienoate binding site. Positions 463 and 465 each coordinate heme b.

It belongs to the cytochrome P450 family. It depends on heme b as a cofactor. Expressed in coleoptiles, and at lower level in leaves of dark-grown seedlings.

Its subcellular location is the plastid. The protein resides in the chloroplast membrane. It carries out the reaction (13S)-hydroperoxy-(9Z,11E,15Z)-octadecatrienoate = (9Z,13S,15Z)-12,13-epoxyoctadeca-9,11,15-trienoate + H2O. It functions in the pathway lipid metabolism; oxylipin biosynthesis. In terms of biological role, involved in the biosynthesis of jasmonic acid, a growth regulator that is implicated also as a signaling molecule in plant defense. Converts 13-hydroperoxylinolenic acid to 12,13-epoxylinolenic acid. In Oryza sativa subsp. japonica (Rice), this protein is Allene oxide synthase 1, chloroplastic (CYP74A1).